Consider the following 154-residue polypeptide: Large ribosomal subunit protein uL13 (154 aa).

This sequence belongs to the universal ribosomal protein uL13 family. Part of the 50S ribosomal subunit.

Functionally, this protein is one of the early assembly proteins of the 50S ribosomal subunit, although it is not seen to bind rRNA by itself. It is important during the early stages of 50S assembly. The chain is Large ribosomal subunit protein uL13 from Rhodopseudomonas palustris (strain BisB18).